A 320-amino-acid chain; its full sequence is Delta-aminolevulinic acid dehydratase (320 aa).

Residues C119, C121, and C129 each contribute to the Zn(2+) site. The active-site Schiff-base intermediate with substrate is the K194. Positions 204 and 216 each coordinate 5-aminolevulinate. E232 serves as a coordination point for Mg(2+). K247 functions as the Schiff-base intermediate with substrate in the catalytic mechanism. S273 is a binding site for 5-aminolevulinate.

This sequence belongs to the ALAD family. In terms of assembly, homooctamer. Requires Zn(2+) as cofactor.

It carries out the reaction 2 5-aminolevulinate = porphobilinogen + 2 H2O + H(+). It participates in porphyrin-containing compound metabolism; protoporphyrin-IX biosynthesis; coproporphyrinogen-III from 5-aminolevulinate: step 1/4. In terms of biological role, catalyzes an early step in the biosynthesis of tetrapyrroles. Binds two molecules of 5-aminolevulinate per subunit, each at a distinct site, and catalyzes their condensation to form porphobilinogen. The polypeptide is Delta-aminolevulinic acid dehydratase (hemB) (Methanothermus sociabilis).